The primary structure comprises 87 residues: Small ribosomal subunit protein bS20 (87 aa).

Belongs to the bacterial ribosomal protein bS20 family.

Its function is as follows. Binds directly to 16S ribosomal RNA. This is Small ribosomal subunit protein bS20 from Rickettsia bellii (strain OSU 85-389).